A 78-amino-acid polypeptide reads, in one-letter code: Large ribosomal subunit protein bL28 (78 aa).

Belongs to the bacterial ribosomal protein bL28 family.

This chain is Large ribosomal subunit protein bL28, found in Synechococcus sp. (strain CC9605).